The chain runs to 147 residues: MRLSDIRPTPGSMRKRIRVGRGIGSGKGKTSGKGHKGQKARGTGKVHPWFEGGQTPIHRRLPKFGFKNFTKKVYTVVNVEDLERKFNSGDEVTPEKLLEVGLIKKINDGVKILGNGEITKPLTVVAHAFSSSARRKIEAVGGKAEVI.

Residues 20–54 (GRGIGSGKGKTSGKGHKGQKARGTGKVHPWFEGGQ) are disordered. The segment covering 30–44 (TSGKGHKGQKARGTG) has biased composition (basic residues).

This sequence belongs to the universal ribosomal protein uL15 family. In terms of assembly, part of the 50S ribosomal subunit.

Functionally, binds to the 23S rRNA. The chain is Large ribosomal subunit protein uL15 from Thermosipho africanus (strain TCF52B).